The sequence spans 466 residues: tRNA modification GTPase MnmE (466 aa).

Arg-25, Glu-82, and Lys-127 together coordinate (6S)-5-formyl-5,6,7,8-tetrahydrofolate. Residues 223–388 enclose the TrmE-type G domain; that stretch reads GIKVVIAGQP…LRRQLLQIAG (166 aa). Residue Asn-233 coordinates K(+). GTP contacts are provided by residues 233–238, 252–258, 277–280, 346–349, and 369–371; these read NAGKSS, TPIAGTT, DTAG, NKAD, and SAR. Mg(2+) is bound at residue Ser-237. Residues Thr-252, Ile-254, and Thr-257 each contribute to the K(+) site. Thr-258 contributes to the Mg(2+) binding site. Lys-466 contributes to the (6S)-5-formyl-5,6,7,8-tetrahydrofolate binding site.

Belongs to the TRAFAC class TrmE-Era-EngA-EngB-Septin-like GTPase superfamily. TrmE GTPase family. As to quaternary structure, homodimer. Heterotetramer of two MnmE and two MnmG subunits. It depends on K(+) as a cofactor.

Its subcellular location is the cytoplasm. Functionally, exhibits a very high intrinsic GTPase hydrolysis rate. Involved in the addition of a carboxymethylaminomethyl (cmnm) group at the wobble position (U34) of certain tRNAs, forming tRNA-cmnm(5)s(2)U34. The sequence is that of tRNA modification GTPase MnmE from Acidovorax sp. (strain JS42).